Consider the following 210-residue polypeptide: Molybdenum cofactor guanylyltransferase (210 aa).

Residues 9–11 (LAG), K21, D66, and D95 contribute to the GTP site. Mg(2+) is bound at residue D95.

It belongs to the MobA family. Monomer. Requires Mg(2+) as cofactor.

It is found in the cytoplasm. It catalyses the reaction Mo-molybdopterin + GTP + H(+) = Mo-molybdopterin guanine dinucleotide + diphosphate. Functionally, transfers a GMP moiety from GTP to Mo-molybdopterin (Mo-MPT) cofactor (Moco or molybdenum cofactor) to form Mo-molybdopterin guanine dinucleotide (Mo-MGD) cofactor. This chain is Molybdenum cofactor guanylyltransferase, found in Syntrophotalea carbinolica (strain DSM 2380 / NBRC 103641 / GraBd1) (Pelobacter carbinolicus).